A 790-amino-acid polypeptide reads, in one-letter code: MRLPWVNGILAFLSSQVLQCLCVQELHVNAETANKISAAGRRMRCSSPLDILILLDGSNSIGRGSFERSKHFASKLCDALDIGSDLIRVGAMQYSGAPQVEFRLDSSFSKAAIKEKIKSIVFKGGPTETGLALKYIVWKGFPGGRPASVPKILIIVSDGKSQGNIKLPAAQIKGEDIEVFTVGVKFPRWEELHALSSEPQEAHVLFAEHVDDAVNGLATSLTNSSLCSSVPHGCSVQSFPCTRKTLETVKELTGNYMCWKGSARPGTVFPGHCPFYSWRRFYNKHQAQCHRTVCPDPCDSQPCKNGGTCIAEGQDKYHCVCPAGFGGDTECAPQLSLECNIDLLFLVDSSDTTSLEAFMQHKSFLKRFIQASLSDESPLNVGVAQYSNEVQMVVKIGEYQSMAELLKHIDNMRFMGGGLFTGKALRYVTQYGFKSTPVFSDVRDDLPRLVVLLTGSKSQDSVTGPATYARDQEVFLIGVTSDSNKGEMAEIVGNPLNLVTYSNPQQLFNQLPQLQKRICSIDVQGCQAQPLDLAFVLDASTAVGQEKFNRLKNFVTMVSLQFDINRDVTQIGLVTYSSRPETVFGLDTHDSGSSLLQGIGRASYMGGSASTGSALLRVYNDVMTVQKGARPGVNKAVVVITDGRGAEDAAVPAQKLRDNGIMVYVIGIGNIQRNSLLRLAGSEKFLISVPSYESLGHYEDSVVQRVCEDAKSPVNLCKPNPCMNDGVCILRQGSYRCDCRGWDGPHCETRILRGDSHWPQGLHSRSRQQRHSRKRRLKSVSGSRSSRKKP.

The first 22 residues, 1–22 (MRLPWVNGILAFLSSQVLQCLC), serve as a signal peptide directing secretion. Positions 50 to 221 (DILILLDGSN…DAVNGLATSL (172 aa)) constitute a VWFA 1 domain. Residues 295-332 (PDPCDSQPCKNGGTCIAEGQDKYHCVCPAGFGGDTECA) enclose the EGF-like 1 domain. 3 disulfide bridges follow: Cys298/Cys309, Cys303/Cys319, and Cys321/Cys331. VWFA domains lie at 342–518 (DLLF…QKRI) and 532–702 (DLAF…EDSV). Residues 713–748 (PVNLCKPNPCMNDGVCILRQGSYRCDCRGWDGPHCE) form the EGF-like 2 domain. Disulfide bonds link Cys717/Cys728, Cys722/Cys737, and Cys739/Cys747. A disordered region spans residues 758-790 (WPQGLHSRSRQQRHSRKRRLKSVSGSRSSRKKP). Basic residues predominate over residues 764–778 (SRSRQQRHSRKRRLK).

As to quaternary structure, forms monomers and multimers.

The protein resides in the secreted. The sequence is that of von Willebrand factor A domain-containing protein 2 (vwa2) from Xenopus laevis (African clawed frog).